We begin with the raw amino-acid sequence, 175 residues long: Putative carbonic anhydrase-like protein YbcF (175 aa).

This sequence belongs to the beta-class carbonic anhydrase family.

This is Putative carbonic anhydrase-like protein YbcF (ybcF) from Bacillus subtilis (strain 168).